The primary structure comprises 1083 residues: Centrosomal protein of 131 kDa (1083 aa).

Disordered stretches follow at residues Met1–Arg155 and Gly220–Glu258. The segment at Met1–Leu250 is interaction with PLK4. Ser14 and Ser35 each carry phosphoserine. At Ser47 the chain carries Phosphoserine; by MAPKAPK2. Polar residues predominate over residues Gln68 to Ser87. A Phosphoserine; by MAPKAPK2 and PLK4 modification is found at Ser78. Residues Ser89, Ser105, Ser114, Ser146, and Ser150 each carry the phosphoserine modification. A compositionally biased stretch (polar residues) spans Leu138–Leu148. The span at Asn232–Gly245 shows a compositional bias: polar residues. One can recognise an IQ domain in the interval Asn269–Gly289. The disordered stretch occupies residues Arg301 to Gln429. 2 stretches are compositionally biased toward basic and acidic residues: residues His317–Arg333 and Gly360–Arg369. Ser381 carries the post-translational modification Phosphoserine. Phosphothreonine is present on Thr383. 6 positions are modified to phosphoserine: Ser453, Ser489, Asp496, Ser499, Ser731, and Ser798. Residues Lys1047–Arg1076 are compositionally biased toward basic and acidic residues. Residues Lys1047–Lys1083 form a disordered region.

The protein belongs to the CEP131 family. Self-associates. Associates with the centriolar satellite BBSome protein complex. Interacts with BBS4; the interaction limits BBS4 availability for association with the BBSome complex, and hence negatively regulates ciliary localization of the BBSome complex. Interacts with MIB1. Interacts with PCM1; the interaction increases in response to ultraviolet light (UV) radiation. Associates with microtubules; association with microtubules is reduced in response to cellular stress, such as UV stimulation, in a process that requires p38 MAP kinase signaling. Interacts with CEP290, DCTN1, PCNT, PCM1 and CEP152. Interacts with 14-3-3 proteins following UV-induced phosphorylation by MAPKAPK2; this inhibits formation of novel centriolar satellites. Interacts with SDCCAG8. Interacts with CCDC61. Interacts with PLK4. Post-translationally, ubiquitinated. Undergoes monoubiquitination catalyzed by the E3 ubiquitin-protein ligase MIB1 in proliferating cells, preventing cilia formation. Monoubiquitination by MIB1 is inhibited in response to cellular stress, such as ultraviolet light (UV) radiation or heat shock, resulting in cilia formation initiation. MAPKAPK2-dependent phosphorylation at Ser-47 and Ser-78 occurs in response to cellular stress such as exposure to ultraviolet irradiation and promotes binding to 14-3-3 proteins which leads to cytoplasmic sequestration of CEP131 and blocks formation of new centriolar satellites. Phosphorylation at Ser-78 mediated by PLK4 is essential for proper organization and integrity of centriolar satellites but is dispensable for its localization to centrioles and its function in ciliogenesis.

It is found in the cytoplasm. Its subcellular location is the cytoskeleton. The protein localises to the microtubule organizing center. The protein resides in the centrosome. It localises to the centriolar satellite. It is found in the centriole. Its subcellular location is the cilium basal body. The protein localises to the cytoplasmic vesicle. The protein resides in the secretory vesicle. It localises to the acrosome. Component of centriolar satellites contributing to the building of a complex and dynamic network required to regulate cilia/flagellum formation. In proliferating cells, MIB1-mediated ubiquitination induces its sequestration within centriolar satellites, precluding untimely cilia formation initiation. In contrast, during normal and ultraviolet or heat shock cellular stress-induced ciliogenesis, its non-ubiquitinated form is rapidly displaced from centriolar satellites and recruited to centrosome/basal bodies in a microtubule- and p38 MAPK-dependent manner. Also acts as a negative regulator of BBSome ciliary trafficking. Plays a role in sperm flagellar formation; may be involved in the regulation of intraflagellar transport (IFT) and/or intramanchette (IMT) trafficking, which are important for axoneme extension and/or cargo delivery to the nascent sperm tail. Required for optimal cell proliferation and cell cycle progression; may play a role in the regulation of genome stability in non-ciliogenic cells. Involved in centriole duplication. Required for CEP152, WDR62 and CEP63 centrosomal localization and promotes the centrosomal localization of CDK2. Essential for maintaining proper centriolar satellite integrity. The chain is Centrosomal protein of 131 kDa (CEP131) from Homo sapiens (Human).